Here is a 284-residue protein sequence, read N- to C-terminus: L-ribulose-5-phosphate 3-epimerase UlaE (284 aa).

It belongs to the L-ribulose-5-phosphate 3-epimerase family.

It catalyses the reaction L-ribulose 5-phosphate = L-xylulose 5-phosphate. Its pathway is cofactor degradation; L-ascorbate degradation; D-xylulose 5-phosphate from L-ascorbate: step 3/4. Catalyzes the isomerization of L-xylulose-5-phosphate to L-ribulose-5-phosphate. Is involved in the anaerobic L-ascorbate utilization. The sequence is that of L-ribulose-5-phosphate 3-epimerase UlaE from Escherichia coli O45:K1 (strain S88 / ExPEC).